The sequence spans 285 residues: Shikimate dehydrogenase (NADP(+)) (285 aa).

Residues 19–21 and T66 contribute to the shikimate site; that span reads SLS. K70 serves as the catalytic Proton acceptor. 2 residues coordinate shikimate: N91 and D107. Residues 129-133 and L228 contribute to the NADP(+) site; that span reads GSGGA. Y230 is a shikimate binding site. G251 is a binding site for NADP(+).

Belongs to the shikimate dehydrogenase family. Homodimer.

The enzyme catalyses shikimate + NADP(+) = 3-dehydroshikimate + NADPH + H(+). It functions in the pathway metabolic intermediate biosynthesis; chorismate biosynthesis; chorismate from D-erythrose 4-phosphate and phosphoenolpyruvate: step 4/7. Its function is as follows. Involved in the biosynthesis of the chorismate, which leads to the biosynthesis of aromatic amino acids. Catalyzes the reversible NADPH linked reduction of 3-dehydroshikimate (DHSA) to yield shikimate (SA). The polypeptide is Shikimate dehydrogenase (NADP(+)) (Prochlorococcus marinus (strain MIT 9515)).